The chain runs to 236 residues: 2-C-methyl-D-erythritol 4-phosphate cytidylyltransferase (236 aa).

It belongs to the IspD/TarI cytidylyltransferase family. IspD subfamily. Homodimer.

The enzyme catalyses 2-C-methyl-D-erythritol 4-phosphate + CTP + H(+) = 4-CDP-2-C-methyl-D-erythritol + diphosphate. The protein operates within isoprenoid biosynthesis; isopentenyl diphosphate biosynthesis via DXP pathway; isopentenyl diphosphate from 1-deoxy-D-xylulose 5-phosphate: step 2/6. Catalyzes the formation of 4-diphosphocytidyl-2-C-methyl-D-erythritol from CTP and 2-C-methyl-D-erythritol 4-phosphate (MEP). The chain is 2-C-methyl-D-erythritol 4-phosphate cytidylyltransferase from Escherichia coli O7:K1 (strain IAI39 / ExPEC).